The following is a 345-amino-acid chain: Anthranilate phosphoribosyltransferase (345 aa).

5-phospho-alpha-D-ribose 1-diphosphate contacts are provided by residues Gly84, 87–88 (GD), Thr92, 94–97 (NIST), 112–120 (KHGGRGVSS), and Ser124. Residue Gly84 participates in anthranilate binding. Ser96 is a binding site for Mg(2+). Residue Arg170 coordinates anthranilate. Asp229 and Glu230 together coordinate Mg(2+).

This sequence belongs to the anthranilate phosphoribosyltransferase family. In terms of assembly, homodimer. It depends on Mg(2+) as a cofactor.

The enzyme catalyses N-(5-phospho-beta-D-ribosyl)anthranilate + diphosphate = 5-phospho-alpha-D-ribose 1-diphosphate + anthranilate. It participates in amino-acid biosynthesis; L-tryptophan biosynthesis; L-tryptophan from chorismate: step 2/5. Functionally, catalyzes the transfer of the phosphoribosyl group of 5-phosphorylribose-1-pyrophosphate (PRPP) to anthranilate to yield N-(5'-phosphoribosyl)-anthranilate (PRA). The polypeptide is Anthranilate phosphoribosyltransferase (Paracidovorax citrulli (strain AAC00-1) (Acidovorax citrulli)).